We begin with the raw amino-acid sequence, 28 residues long: Omega-conotoxin-like CnVIIH (28 aa).

Disulfide bonds link Cys1-Cys16, Cys8-Cys20, and Cys15-Cys27. 4-hydroxyproline; partial is present on Pro7. Met12 carries the post-translational modification Methionine sulfoxide. Cysteine amide is present on Cys27.

Belongs to the conotoxin O1 superfamily. Expressed by the venom duct.

It localises to the secreted. Omega-conotoxins act at presynaptic membranes, they bind and block voltage-gated calcium channels (Cav). This toxin blocks N-type calcium channels (Cav2.2/CACNA1B) with high potency. Unexpectedly, it does not show any blocking activity at amphibian neuromuscular junction. In vivo, when intracerebroventricularly injected into mice causes shaking activity, and, at higher doses, causes mild tremors. When injected intramuscularly into fish, it causes paralysis, and, at higher doses, causes death. In Conus consors (Singed cone), this protein is Omega-conotoxin-like CnVIIH.